The chain runs to 264 residues: tRNA (guanine-N(1)-)-methyltransferase (264 aa).

S-adenosyl-L-methionine-binding positions include Gly-116 and 136–141 (VGDFVL).

The protein belongs to the RNA methyltransferase TrmD family. In terms of assembly, homodimer.

It localises to the cytoplasm. It carries out the reaction guanosine(37) in tRNA + S-adenosyl-L-methionine = N(1)-methylguanosine(37) in tRNA + S-adenosyl-L-homocysteine + H(+). In terms of biological role, specifically methylates guanosine-37 in various tRNAs. In Koribacter versatilis (strain Ellin345), this protein is tRNA (guanine-N(1)-)-methyltransferase.